Here is a 329-residue protein sequence, read N- to C-terminus: MAELFWFEKYRPRSFDEVVDLEEVKSRLREFVKSGNMPHLLFYGPPGTGKTTMALVLARELYGEYWRENTLELNASDERGINVIRERVKEFARTAPVGKAPFKLVILDEADNMTSDAQQALRRIMEIYAQNTRFILLANYVSRIIDPIISRCAVFRFSPMPRHLMAERLKYIAKSEGVEVKEDAIDLIYELSEGDMRKAINILQVAAATNKIVDRNVVAAAAAAIRPTDIVELFNLALSGDYLKAREKMRELMYVKGVAGVDFIRAFQRELIRMSLDDETKAEVAELLADVDYRLTQGADEEIQLSYFLAKLGSIGKKIRAASLPPKKR.

44-51 (GPPGTGKT) is a binding site for ATP.

Belongs to the activator 1 small subunits family. RfcS subfamily. In terms of assembly, heteromultimer composed of small subunits (RfcS) and large subunits (RfcL).

Part of the RFC clamp loader complex which loads the PCNA sliding clamp onto DNA. The sequence is that of Replication factor C small subunit 1 from Pyrobaculum islandicum (strain DSM 4184 / JCM 9189 / GEO3).